The following is a 214-amino-acid chain: ATP synthase subunit a (214 aa).

6 helical membrane-spanning segments follow: residues 9-29 (LDGM…VFMI), 64-84 (IMMV…TYGI), 88-108 (LWVN…SGYI), 121-141 (SGAP…SIMI), 150-170 (LVAN…VLSS), and 182-202 (LIMV…AYIF).

It belongs to the ATPase A chain family. In terms of assembly, F-type ATPases have 2 components, CF(1) - the catalytic core - and CF(0) - the membrane proton channel. CF(1) has five subunits: alpha(3), beta(3), gamma(1), delta(1), epsilon(1). CF(0) has three main subunits: a, b and c.

Its subcellular location is the mitochondrion inner membrane. Its function is as follows. Mitochondrial membrane ATP synthase (F(1)F(0) ATP synthase or Complex V) produces ATP from ADP in the presence of a proton gradient across the membrane which is generated by electron transport complexes of the respiratory chain. F-type ATPases consist of two structural domains, F(1) - containing the extramembraneous catalytic core and F(0) - containing the membrane proton channel, linked together by a central stalk and a peripheral stalk. During catalysis, ATP synthesis in the catalytic domain of F(1) is coupled via a rotary mechanism of the central stalk subunits to proton translocation. Key component of the proton channel; it may play a direct role in the translocation of protons across the membrane. The sequence is that of ATP synthase subunit a (ATP6) from Albinaria caerulea (Land snail).